A 384-amino-acid polypeptide reads, in one-letter code: Probable E3 ubiquitin-protein ligase rnf113 (384 aa).

Over residues 1 to 11 (MDLFRKPKKRN) the composition is skewed to basic residues. Positions 1–96 (MDLFRKPKKR…GPSGPRDQGA (96 aa)) are disordered. The span at 42 to 52 (PMVQSTKQLDA) shows a compositional bias: polar residues. Positions 60-71 (SSDDSDDSDDNQ) are enriched in acidic residues. The C3H1-type zinc-finger motif lies at 175–203 (DFAPDICKDYKETGFCTFGDSCKFVHDRS). The RING-type zinc finger occupies 241-279 (CFICGNPFVDPIVTKCKHYFCTGCALKSFQKSSKCPICQ). The segment at 299–384 (KKQQQKQEAE…ESDDDDAEKD (86 aa)) is disordered. Composition is skewed to basic and acidic residues over residues 303 to 312 (QKQEAEKQEE) and 320 to 334 (EKPH…HDHE). Positions 351-384 (EKSDEEQEIMMEDVEGLEGGENDSESDDDDAEKD) are enriched in acidic residues.

It catalyses the reaction S-ubiquitinyl-[E2 ubiquitin-conjugating enzyme]-L-cysteine + [acceptor protein]-L-lysine = [E2 ubiquitin-conjugating enzyme]-L-cysteine + N(6)-ubiquitinyl-[acceptor protein]-L-lysine.. The protein operates within protein modification; protein ubiquitination. In terms of biological role, may function as E3 ubiquitin-protein ligase that catalyzes the transfer of ubiquitin onto target proteins. May play a role in DNA repair via its role in the synthesis of 'Lys-63'-linked polyubiquitin chains that recruit proteins involved in repair to sites of DNA damage by alkylating agents. This Caenorhabditis elegans protein is Probable E3 ubiquitin-protein ligase rnf113 (rnf-113).